The sequence spans 240 residues: tRNA (guanine-N(1)-)-methyltransferase (240 aa).

Residues Gly110 and 129–134 contribute to the S-adenosyl-L-methionine site; that span reads LGDFVL.

This sequence belongs to the RNA methyltransferase TrmD family. Homodimer.

The protein localises to the cytoplasm. It catalyses the reaction guanosine(37) in tRNA + S-adenosyl-L-methionine = N(1)-methylguanosine(37) in tRNA + S-adenosyl-L-homocysteine + H(+). Its function is as follows. Specifically methylates guanosine-37 in various tRNAs. This Clostridium botulinum (strain ATCC 19397 / Type A) protein is tRNA (guanine-N(1)-)-methyltransferase.